A 364-amino-acid chain; its full sequence is Phospho-N-acetylmuramoyl-pentapeptide-transferase (364 aa).

The next 10 helical transmembrane spans lie at 18-38 (SLLI…AQIL), 48-68 (LFPL…VVPV), 91-111 (GTPT…ALIW), 114-134 (LDPA…IGWI), 154-174 (LILQ…TQSA), 183-203 (GQII…VLVA), 214-234 (VDGL…ALMA), 237-257 (NPGL…FIVH), 280-300 (AIGI…IFFV), and 343-363 (TQIV…AVIS).

Belongs to the glycosyltransferase 4 family. MraY subfamily. Mg(2+) serves as cofactor.

The protein localises to the cell inner membrane. The catalysed reaction is UDP-N-acetyl-alpha-D-muramoyl-L-alanyl-gamma-D-glutamyl-meso-2,6-diaminopimeloyl-D-alanyl-D-alanine + di-trans,octa-cis-undecaprenyl phosphate = di-trans,octa-cis-undecaprenyl diphospho-N-acetyl-alpha-D-muramoyl-L-alanyl-D-glutamyl-meso-2,6-diaminopimeloyl-D-alanyl-D-alanine + UMP. The protein operates within cell wall biogenesis; peptidoglycan biosynthesis. Functionally, catalyzes the initial step of the lipid cycle reactions in the biosynthesis of the cell wall peptidoglycan: transfers peptidoglycan precursor phospho-MurNAc-pentapeptide from UDP-MurNAc-pentapeptide onto the lipid carrier undecaprenyl phosphate, yielding undecaprenyl-pyrophosphoryl-MurNAc-pentapeptide, known as lipid I. In Rippkaea orientalis (strain PCC 8801 / RF-1) (Cyanothece sp. (strain PCC 8801)), this protein is Phospho-N-acetylmuramoyl-pentapeptide-transferase.